The following is a 169-amino-acid chain: ATP synthase subunit b (169 aa).

The chain crosses the membrane as a helical span at residues 12-32 (PSVGLIFWKTVAFLIFLYILY). Positions 69-107 (AENEEARREAEQKAQQILREARDSAEELREEEKAKTRRE) are disordered. Over residues 87-107 (REARDSAEELREEEKAKTRRE) the composition is skewed to basic and acidic residues.

This sequence belongs to the ATPase B chain family. In terms of assembly, F-type ATPases have 2 components, F(1) - the catalytic core - and F(0) - the membrane proton channel. F(1) has five subunits: alpha(3), beta(3), gamma(1), delta(1), epsilon(1). F(0) has three main subunits: a(1), b(2) and c(10-14). The alpha and beta chains form an alternating ring which encloses part of the gamma chain. F(1) is attached to F(0) by a central stalk formed by the gamma and epsilon chains, while a peripheral stalk is formed by the delta and b chains.

It is found in the cell inner membrane. In terms of biological role, f(1)F(0) ATP synthase produces ATP from ADP in the presence of a proton or sodium gradient. F-type ATPases consist of two structural domains, F(1) containing the extramembraneous catalytic core and F(0) containing the membrane proton channel, linked together by a central stalk and a peripheral stalk. During catalysis, ATP synthesis in the catalytic domain of F(1) is coupled via a rotary mechanism of the central stalk subunits to proton translocation. Component of the F(0) channel, it forms part of the peripheral stalk, linking F(1) to F(0). In Salinibacter ruber (strain DSM 13855 / M31), this protein is ATP synthase subunit b.